The sequence spans 186 residues: Protein C (186 aa).

A compositionally biased stretch (polar residues) spans 1 to 12 (MSKTDWNASGPS). Positions 1–43 (MSKTDWNASGPSRPSPSAHWPSGKLWQHGQKYQTTQDRSRPPA) are disordered.

This sequence belongs to the morbillivirus protein C family. As to quaternary structure, interacts with the phosphoprotein (via C-terminus); this interaction allows C to associate with the ribonucleocapsid.

It is found in the host nucleus. The protein localises to the host cytoplasmic vesicle. Its function is as follows. Ribonucleocapsid-associated protein that interacts with the phosphoprotein (P), thereby increasing replication accuracy and processivity of the polymerase complex. The sequence is that of Protein C (P/V/C) from Homo sapiens (Human).